A 306-amino-acid polypeptide reads, in one-letter code: Diacylglycerol kinase (306 aa).

Positions 1 to 132 (MRKRARIIYN…VDIGKMNSRY (132 aa)) constitute a DAGKc domain. Residues 10 to 14 (NPTSG), threonine 41, 67 to 73 (GDGTLNE), and threonine 94 each bind ATP. Mg(2+)-binding residues include arginine 213, aspartate 216, and tyrosine 218. Residue glutamate 273 is the Proton acceptor of the active site.

Belongs to the diacylglycerol/lipid kinase family. Homodimer. Mg(2+) is required as a cofactor.

The catalysed reaction is a 1,2-diacyl-sn-glycerol + ATP = a 1,2-diacyl-sn-glycero-3-phosphate + ADP + H(+). In terms of biological role, catalyzes the phosphorylation of diacylglycerol (DAG) into phosphatidic acid. Is a key enzyme involved in the production of lipoteichoic acid by reintroducing DAG formed from the breakdown of membrane phospholipids into the phosphatidylglycerol biosynthetic pathway. The sequence is that of Diacylglycerol kinase (dagK) from Staphylococcus carnosus (strain TM300).